A 648-amino-acid chain; its full sequence is ATP-dependent DNA helicase Q1 (648 aa).

The 176-residue stretch at 100–275 (INVTMARKDI…QKILCVGKCL (176 aa)) folds into the Helicase ATP-binding domain. An ATP-binding site is contributed by 113 to 120 (MPTGGGKS). A DEVH box motif is present at residues 219–222 (DEVH). Residues 299–451 (DFTEDIVKLI…EMVSYCQNVS (153 aa)) form the Helicase C-terminal domain. Zn(2+) is bound by residues cysteine 453, cysteine 471, cysteine 475, and cysteine 478. An N6-acetyllysine mark is found at lysine 514 and lysine 522. Phosphoserine is present on serine 597. The disordered stretch occupies residues 601–648 (ALSEARQVEQVDSKGEEQSSGNSQKSKSRLQPSGSKNAGAKKRKLDDA). Basic and acidic residues predominate over residues 606–617 (RQVEQVDSKGEE). Positions 618–636 (QSSGNSQKSKSRLQPSGSK) are enriched in polar residues. Serine 633 bears the Phosphoserine mark. The span at 639–648 (GAKKRKLDDA) shows a compositional bias: basic residues.

The protein belongs to the helicase family. RecQ subfamily. May form homodimers or higher order oligomers. Interacts with EXO1. Interacts with MLH1. Interacts with PARP1. Mg(2+) is required as a cofactor. Mn(2+) serves as cofactor. Requires Zn(2+) as cofactor. As to expression, expressed in all tissues examined. In terms of tissue distribution, only expressed in spermatocytes. Expression increases at pachytene (17 days old) and decreases after completion of meiosis II (7 weeks old).

The protein localises to the nucleus. The catalysed reaction is Couples ATP hydrolysis with the unwinding of duplex DNA by translocating in the 3'-5' direction.. The enzyme catalyses ATP + H2O = ADP + phosphate + H(+). It carries out the reaction dATP + H2O = dADP + phosphate + H(+). DNA helicase that plays a role in DNA damage repair and genome stability. Exhibits a magnesium- and ATP-dependent DNA-helicase activity that unwinds single- and double-stranded DNA in a 3'-5' direction. Plays a role in restoring regressed replication forks. Required to restart stalled replication forks induced by abortive topoisomerase 1 and 2 lesions. May play a role in the repair of DNA that is damaged by ultraviolet light or other mutagens. The polypeptide is ATP-dependent DNA helicase Q1 (Recql) (Mus musculus (Mouse)).